The primary structure comprises 326 residues: Undecaprenyl-phosphate 4-deoxy-4-formamido-L-arabinose transferase (326 aa).

A run of 2 helical transmembrane segments spans residues 234 to 254 (LLSI…ILLI) and 269 to 289 (VFTL…GMGL).

Belongs to the glycosyltransferase 2 family.

The protein resides in the cell inner membrane. It catalyses the reaction UDP-4-deoxy-4-formamido-beta-L-arabinose + di-trans,octa-cis-undecaprenyl phosphate = 4-deoxy-4-formamido-alpha-L-arabinopyranosyl di-trans,octa-cis-undecaprenyl phosphate + UDP. It participates in glycolipid biosynthesis; 4-amino-4-deoxy-alpha-L-arabinose undecaprenyl phosphate biosynthesis; 4-amino-4-deoxy-alpha-L-arabinose undecaprenyl phosphate from UDP-4-deoxy-4-formamido-beta-L-arabinose and undecaprenyl phosphate: step 1/2. Its pathway is bacterial outer membrane biogenesis; lipopolysaccharide biosynthesis. Its function is as follows. Catalyzes the transfer of 4-deoxy-4-formamido-L-arabinose from UDP to undecaprenyl phosphate. The modified arabinose is attached to lipid A and is required for resistance to polymyxin and cationic antimicrobial peptides. This is Undecaprenyl-phosphate 4-deoxy-4-formamido-L-arabinose transferase from Aeromonas hydrophila subsp. hydrophila (strain ATCC 7966 / DSM 30187 / BCRC 13018 / CCUG 14551 / JCM 1027 / KCTC 2358 / NCIMB 9240 / NCTC 8049).